The following is a 1049-amino-acid chain: Dyslexia-associated protein KIAA0319-like protein (1049 aa).

At Met-1–Arg-29 the chain is on the cytoplasmic side. Residues Thr-30 to Ser-50 traverse the membrane as a helical segment. The MANSC domain maps to Ala-49–Met-127. The Extracellular portion of the chain corresponds to Glu-51–Tyr-932. Positions Thr-234 to Val-277 are disordered. Residues Asn-247, Asn-395, and Asn-487 are each glycosylated (N-linked (GlcNAc...) asparagine). PKD domains follow at residues Val-310–Glu-401, Ile-409–Ala-498, Val-504–Glu-594, Gln-600–Glu-688, and Ile-694–Asp-785. Residues Val-933 to Cys-953 traverse the membrane as a helical segment. The Cytoplasmic segment spans residues Cys-954–Leu-1049. Residue Thr-974 is modified to Phosphothreonine. Ser-978, Ser-1009, and Ser-1031 each carry phosphoserine. Residues Gly-1022 to Leu-1049 form a disordered region. A compositionally biased stretch (polar residues) spans Gln-1028–Thr-1037. The residue at position 1037 (Thr-1037) is a Phosphothreonine.

In terms of assembly, interacts with RTN4R. Post-translationally, N-glycosylated.

The protein localises to the cytoplasmic granule membrane. It is found in the golgi apparatus membrane. The protein resides in the golgi apparatus. It localises to the trans-Golgi network membrane. Its subcellular location is the cell membrane. Functionally, possible role in axon guidance through interaction with RTN4R. The polypeptide is Dyslexia-associated protein KIAA0319-like protein (Pongo abelii (Sumatran orangutan)).